Here is an 85-residue protein sequence, read N- to C-terminus: MAKEELIEMSGMVVEVLPDSRFRVTLDNGHNLVAYSAGKMRKHHIRILCGDKVSLELSPYDLSKGRITFRHLEGRGPLGPQRRRR.

Residues 1 to 72 (MAKEELIEMS…SKGRITFRHL (72 aa)) form the S1-like domain.

The protein belongs to the IF-1 family. As to quaternary structure, component of the 30S ribosomal translation pre-initiation complex which assembles on the 30S ribosome in the order IF-2 and IF-3, IF-1 and N-formylmethionyl-tRNA(fMet); mRNA recruitment can occur at any time during PIC assembly.

The protein resides in the cytoplasm. Its function is as follows. One of the essential components for the initiation of protein synthesis. Stabilizes the binding of IF-2 and IF-3 on the 30S subunit to which N-formylmethionyl-tRNA(fMet) subsequently binds. Helps modulate mRNA selection, yielding the 30S pre-initiation complex (PIC). Upon addition of the 50S ribosomal subunit IF-1, IF-2 and IF-3 are released leaving the mature 70S translation initiation complex. This chain is Translation initiation factor IF-1 1, found in Aromatoleum aromaticum (strain DSM 19018 / LMG 30748 / EbN1) (Azoarcus sp. (strain EbN1)).